A 439-amino-acid polypeptide reads, in one-letter code: Cell division protein DivIB (439 aa).

Disordered regions lie at residues 1-96 (MDDK…DSNI) and 119-149 (DNEQPQSAPKEQNSDSIDEETVTKKERKSKV). At 1–173 (MDDKTKNDQQ…RRKRQKRIQY (173 aa)) the chain is on the cytoplasmic side. Positions 11–20 (ESNEDKDELE) are enriched in acidic residues. Basic residues predominate over residues 26-38 (TSKKRRQRKRSKA). Positions 64–76 (KDFKKEESNDKNN) are enriched in basic and acidic residues. A compositionally biased stretch (low complexity) spans 77 to 86 (DSASSHANDN). The span at 87–96 (NIDDSTDSNI) shows a compositional bias: acidic residues. Positions 119-133 (DNEQPQSAPKEQNSD) are enriched in polar residues. A helical transmembrane segment spans residues 174–194 (SVITILVLLIAVILIYMFSPL). The POTRA domain occupies 195 to 263 (SKIAHVNING…NTLNVDITEN (69 aa)). Topologically, residues 195–439 (SKIAHVNING…KINKQSSKNN (245 aa)) are extracellular. A disordered region spans residues 396–439 (YRGNTSSQSESDKNVTKSSQEENQAKEELQSVLNKINKQSSKNN). The span at 405–424 (ESDKNVTKSSQEENQAKEEL) shows a compositional bias: basic and acidic residues. The segment covering 426–439 (SVLNKINKQSSKNN) has biased composition (polar residues).

It belongs to the FtsQ/DivIB family. DivIB subfamily.

It is found in the cell membrane. In terms of biological role, cell division protein that may be involved in stabilizing or promoting the assembly of the division complex. The polypeptide is Cell division protein DivIB (Staphylococcus aureus (strain NCTC 8325 / PS 47)).